Here is a 162-residue protein sequence, read N- to C-terminus: Large ribosomal subunit protein uL10 (162 aa).

It belongs to the universal ribosomal protein uL10 family. As to quaternary structure, part of the ribosomal stalk of the 50S ribosomal subunit. The N-terminus interacts with L11 and the large rRNA to form the base of the stalk. The C-terminus forms an elongated spine to which L12 dimers bind in a sequential fashion forming a multimeric L10(L12)X complex.

Functionally, forms part of the ribosomal stalk, playing a central role in the interaction of the ribosome with GTP-bound translation factors. This is Large ribosomal subunit protein uL10 from Borrelia duttonii (strain Ly).